The sequence spans 600 residues: DDB1- and CUL4-associated factor 15 (600 aa).

The disordered stretch occupies residues 1–30 (MAPSSKSERNSGAGSGGGGPGGAGGKRAAG). A compositionally biased stretch (gly residues) spans 13-27 (AGSGGGGPGGAGGKR). Residue S50 is modified to Phosphoserine. Zn(2+) is bound by residues C193, C196, C211, and H214. E7820 is bound by residues F231 and 234 to 235 (AF). Residues 280–295 (PASPPEPQSPELPPAL) show a composition bias toward pro residues. The interval 280-316 (PASPPEPQSPELPPALPSFCPEAAPARSSGSPEPSPA) is disordered. 2 positions are modified to phosphoserine: S310 and S314.

Component of the DCX(DCAF15) complex, also named CLR4(DCAF15) complex, composed of DCAF15, DDB1, cullin-4 (CUL4A or CUL4B), DDA1 and RBX1.

It participates in protein modification; protein ubiquitination. Aryl sulfonamide anticancer drugs change the substrate specificity of DCAF15 by acting as a molecular glue that promotes binding between DCAF15 and weak affinity interactors, such as RBM39. Functionally, substrate-recognition component of the DCX(DCAF15) complex, a cullin-4-RING E3 ubiquitin-protein ligase complex that mediates ubiquitination and degradation of target proteins. The DCX(DCAF15) complex acts as a regulator of the natural killer (NK) cells effector functions, possibly by mediating ubiquitination and degradation of cohesin subunits SMC1A and SMC3. May play a role in the activation of antigen-presenting cells (APC) and their interaction with NK cells. Binding of aryl sulfonamide anticancer drugs, such as indisulam (E7070) or E7820, change the substrate specificity of the DCX(DCAF15) complex, leading to promote ubiquitination and degradation of splicing factor RBM39. RBM39 degradation results in splicing defects and death in cancer cell lines. Aryl sulfonamide anticancer drugs change the substrate specificity of DCAF15 by acting as a molecular glue that promotes binding between DCAF15 and weak affinity interactor RBM39. Aryl sulfonamide anticancer drugs also promote ubiquitination and degradation of RBM23 and PRPF39. The chain is DDB1- and CUL4-associated factor 15 from Homo sapiens (Human).